A 221-amino-acid chain; its full sequence is Putative 3-methyladenine DNA glycosylase (221 aa).

Belongs to the DNA glycosylase MPG family.

The protein is Putative 3-methyladenine DNA glycosylase of Herpetosiphon aurantiacus (strain ATCC 23779 / DSM 785 / 114-95).